Consider the following 115-residue polypeptide: MQQESDRNEQGYSSSPPSSNKQDSSDDTKKNHRREKNRIAAQKSRQRQTEKADSLHIESENLERLNSALRGEISGLREELKYLTCVLSTHQPVCVLGPTKPQAILPHVGSTRYQH.

The interval 1–60 (MQQESDRNEQGYSSSPPSSNKQDSSDDTKKNHRREKNRIAAQKSRQRQTEKADSLHIESE) is disordered. Residues 13 to 22 (SSSPPSSNKQ) are compositionally biased toward low complexity. One can recognise a bZIP domain in the interval 27-90 (DTKKNHRREK…KYLTCVLSTH (64 aa)). Residues 29-51 (KKNHRREKNRIAAQKSRQRQTEK) form a basic motif region. Positions 47–60 (RQTEKADSLHIESE) are enriched in basic and acidic residues. The tract at residues 55-83 (LHIESENLERLNSALRGEISGLREELKYL) is leucine-zipper.

It belongs to the bZIP family.

The protein localises to the nucleus. Its subcellular location is the cytoplasm. Its function is as follows. AP-1 family transcription factor that controls the differentiation of lineage-specific cells in the immune system: specifically mediates the differentiation of T-helper 17 cells (Th17), follicular T-helper cells (TfH), CD8(+) dendritic cells and class-switch recombination (CSR) in B-cells. The protein is Basic leucine zipper transcriptional factor ATF-like (batf) of Xenopus laevis (African clawed frog).